A 346-amino-acid chain; its full sequence is Putative aminopeptidase YhfE (346 aa).

Residues histidine 68 and aspartate 185 each contribute to the a divalent metal cation site. The active-site Proton acceptor is glutamate 219. The a divalent metal cation site is built by glutamate 220, aspartate 240, and histidine 320.

It belongs to the peptidase M42 family. The cofactor is a divalent metal cation.

This is Putative aminopeptidase YhfE (yhfE) from Bacillus subtilis (strain 168).